The following is a 338-amino-acid chain: MAPIKVGINGFGRIGRIVFRNAIEHPEVEIVAVNDPFIETKYAAYMLKYDSTHGIFNGEIKQEGNDLVINGKTVKFYTERDPAAIPWKETGADYVVESTGVFTTTDKAKAHLQGGAKKVIISAPSADAPMYVMVVNEKSYDGSADVISNASCTTNCLAPLAKVINDKFGIVEGLMTTVHSYTATQKTVHGPSAKDWRGGRTAAQNIIPSSTGAAKAVGKVIPELNGKLTDMSMRVPTTNVSVVDLTARIEKGASYDEIKQAIKEAAEGPLKGVLAYTEDDVVSTDMIGNPNSSIFDAKAGISLNNNFVKLVSWYDNEWGYSRRVLDLLAHVAKVDASK.

Residues 13–14, Asp35, and Arg80 each bind NAD(+); that span reads RI. D-glyceraldehyde 3-phosphate contacts are provided by residues 151–153, Thr182, 211–212, and Arg234; these read SCT and TG. The active-site Nucleophile is Cys152. Asn316 lines the NAD(+) pocket.

This sequence belongs to the glyceraldehyde-3-phosphate dehydrogenase family. As to quaternary structure, homotetramer.

The protein resides in the cytoplasm. The enzyme catalyses D-glyceraldehyde 3-phosphate + phosphate + NAD(+) = (2R)-3-phospho-glyceroyl phosphate + NADH + H(+). Its pathway is carbohydrate degradation; glycolysis; pyruvate from D-glyceraldehyde 3-phosphate: step 1/5. The protein is Glyceraldehyde-3-phosphate dehydrogenase (GPDA) of Colletotrichum gloeosporioides (Anthracnose fungus).